A 714-amino-acid polypeptide reads, in one-letter code: T-cell activation Rho GTPase-activating protein (714 aa).

In terms of domain architecture, Rho-GAP spans 88-277 (QPLSIICGEN…FLIDNCFEIF (190 aa)). Disordered stretches follow at residues 290–357 (DDSL…ESSV), 370–419 (QDRR…AEDP), 451–508 (QGHI…HSMS), 520–563 (RTSS…QSQT), and 623–650 (KPST…HRLS). Polar residues predominate over residues 299–311 (SDVSTLQNDSAYD). Residue serine 398 is modified to Phosphoserine. The span at 459 to 471 (SRSSPGESLGSSP) shows a compositional bias: low complexity. Basic and acidic residues-rich tracts occupy residues 492–501 (KTDKTKPQRE) and 527–545 (EKSK…RKES).

In terms of tissue distribution, highly expressed in testis.

Its function is as follows. May function as a GTPase-activating protein. May play a role in transmission ratio distortion (TRD) in mouse, in which heterozygous males for t-locus transmit their t-carrying chromosome to 95% or more of their offspring. The polypeptide is T-cell activation Rho GTPase-activating protein (Tagap) (Mus musculus (Mouse)).